The primary structure comprises 349 residues: MENIAKILRLAEEKILLVQNLKDLQEYKVEFLGKNGIVTGELKKLGSLNEQARKEFGLKINKLKDKIQNTIKVKEEILEEQELNLKLAADKIDLTIPARKYKQGSIHPITQCSEELIQVFSKFGFTINNGPNIEDTFHNFTALNFEDDHPARQMHDTFYLKGQEDSKPMLLRTHTSTVQIRAMKNGNPPFRFIALGRTYRSDSDMTHTPMFHQIEGLVIDKNINMGHLKYVITEFIRSFFENSHIELRFRPSFFPFTEPSAEVDIRMNKNDQWLEVLGCGMVHPNVLKNVGIDSSEYQGFAFGLGVERFAMLKYNIKDLRQFFEGDMRWLKHYNFGGFDIPNLAGGLTK.

Position 258 (glutamate 258) interacts with Mg(2+).

This sequence belongs to the class-II aminoacyl-tRNA synthetase family. Phe-tRNA synthetase alpha subunit type 1 subfamily. In terms of assembly, tetramer of two alpha and two beta subunits. The cofactor is Mg(2+).

Its subcellular location is the cytoplasm. The enzyme catalyses tRNA(Phe) + L-phenylalanine + ATP = L-phenylalanyl-tRNA(Phe) + AMP + diphosphate + H(+). The sequence is that of Phenylalanine--tRNA ligase alpha subunit from Rickettsia canadensis (strain McKiel).